Consider the following 490-residue polypeptide: Lignostilbene-alpha,beta-dioxygenase isozyme III (490 aa).

4 residues coordinate Fe cation: His167, His218, His285, and His477.

It belongs to the carotenoid oxygenase family. In terms of assembly, homodimer of two beta subunits. Fe(2+) is required as a cofactor.

It catalyses the reaction 1,2-bis(4-hydroxy-3-methoxyphenyl)ethylene + O2 = 2 vanillin. Its activity is regulated as follows. Activity is high with beta-5 type stilbene and minimal with beta-1 type stilbene. A 4-hydroxyl group and trans-stilbene structure is essential for the binding of substrates to the enzyme. Catalyzes the cleavage of the interphenyl double bond (C alpha-C beta) of lignin-derived polyphenolic diaryl-propane type compounds (Stilbene). In Sphingomonas paucimobilis (Pseudomonas paucimobilis), this protein is Lignostilbene-alpha,beta-dioxygenase isozyme III.